The primary structure comprises 169 residues: Peptide methionine sulfoxide reductase MsrA (169 aa).

Residue Cys10 is part of the active site.

Belongs to the MsrA Met sulfoxide reductase family.

The enzyme catalyses L-methionyl-[protein] + [thioredoxin]-disulfide + H2O = L-methionyl-(S)-S-oxide-[protein] + [thioredoxin]-dithiol. The catalysed reaction is [thioredoxin]-disulfide + L-methionine + H2O = L-methionine (S)-S-oxide + [thioredoxin]-dithiol. In terms of biological role, has an important function as a repair enzyme for proteins that have been inactivated by oxidation. Catalyzes the reversible oxidation-reduction of methionine sulfoxide in proteins to methionine. The chain is Peptide methionine sulfoxide reductase MsrA from Streptococcus uberis (strain ATCC BAA-854 / 0140J).